A 302-amino-acid chain; its full sequence is Sulfate adenylyltransferase subunit 2 (302 aa).

The protein belongs to the PAPS reductase family. CysD subfamily. In terms of assembly, heterodimer composed of CysD, the smaller subunit, and CysN.

It catalyses the reaction sulfate + ATP + H(+) = adenosine 5'-phosphosulfate + diphosphate. It participates in sulfur metabolism; hydrogen sulfide biosynthesis; sulfite from sulfate: step 1/3. Functionally, with CysN forms the ATP sulfurylase (ATPS) that catalyzes the adenylation of sulfate producing adenosine 5'-phosphosulfate (APS) and diphosphate, the first enzymatic step in sulfur assimilation pathway. APS synthesis involves the formation of a high-energy phosphoric-sulfuric acid anhydride bond driven by GTP hydrolysis by CysN coupled to ATP hydrolysis by CysD. This is Sulfate adenylyltransferase subunit 2 from Xanthomonas euvesicatoria pv. vesicatoria (strain 85-10) (Xanthomonas campestris pv. vesicatoria).